Here is a 585-residue protein sequence, read N- to C-terminus: Butyrophilin subfamily 3 member A3 (585 aa).

An N-terminal signal peptide occupies residues 1–29; it reads MKMASSLACLLLNFHVSVFLVQLLTPCSA. 2 consecutive Ig-like V-type domains span residues 30–139 and 145–236; these read QFSV…KALV and ALGS…ASIS. Residues 30-248 are Extracellular-facing; sequence QFSVLGPSGP…DPFFTSAQPW (219 aa). 2 disulfide bridges follow: C52–C126 and C166–C220. N115 carries N-linked (GlcNAc...) asparagine glycosylation. A helical membrane pass occupies residues 249-269; the sequence is IAALAGTLPISLLLLAGASYF. The Cytoplasmic portion of the chain corresponds to 270–585; the sequence is LWRQQKEKIA…KPQACTEALY (316 aa). The B30.2/SPRY domain maps to 322-518; the sequence is RGEKSLAYHE…LTICPTPKEV (197 aa). Residues 560-585 are disordered; sequence AGAEGVSPSTTTSQNHKPQACTEALY. A compositionally biased stretch (polar residues) spans 566 to 576; sequence SPSTTTSQNHK.

The protein belongs to the immunoglobulin superfamily. BTN/MOG family.

The protein localises to the membrane. In Pongo abelii (Sumatran orangutan), this protein is Butyrophilin subfamily 3 member A3 (BTN3A3).